A 481-amino-acid chain; its full sequence is Ribulose bisphosphate carboxylase large chain (481 aa).

Positions 1-2 (MS) are excised as a propeptide. Position 3 is an N-acetylproline (P3). N6,N6,N6-trimethyllysine is present on K14. Residues N123 and T173 each coordinate substrate. The Proton acceptor role is filled by K175. Residue K177 participates in substrate binding. Positions 201, 203, and 204 each coordinate Mg(2+). K201 carries the N6-carboxylysine modification. H294 serves as the catalytic Proton acceptor. R295, H327, and S379 together coordinate substrate.

Belongs to the RuBisCO large chain family. Type I subfamily. In terms of assembly, heterohexadecamer of 8 large chains and 8 small chains; disulfide-linked. The disulfide link is formed within the large subunit homodimers. Mg(2+) is required as a cofactor. Post-translationally, the disulfide bond which can form in the large chain dimeric partners within the hexadecamer appears to be associated with oxidative stress and protein turnover.

It localises to the plastid. The catalysed reaction is 2 (2R)-3-phosphoglycerate + 2 H(+) = D-ribulose 1,5-bisphosphate + CO2 + H2O. It catalyses the reaction D-ribulose 1,5-bisphosphate + O2 = 2-phosphoglycolate + (2R)-3-phosphoglycerate + 2 H(+). Its function is as follows. RuBisCO catalyzes two reactions: the carboxylation of D-ribulose 1,5-bisphosphate, the primary event in carbon dioxide fixation, as well as the oxidative fragmentation of the pentose substrate in the photorespiration process. Both reactions occur simultaneously and in competition at the same active site. This is Ribulose bisphosphate carboxylase large chain from Cuscuta gronovii (Common dodder).